A 421-amino-acid chain; its full sequence is D-amino acid dehydrogenase (421 aa).

FAD is bound at residue 3–17 (VIVLGSGVIGVASAY).

The protein belongs to the DadA oxidoreductase family. It depends on FAD as a cofactor.

It catalyses the reaction a D-alpha-amino acid + A + H2O = a 2-oxocarboxylate + AH2 + NH4(+). Its pathway is amino-acid degradation; D-alanine degradation; NH(3) and pyruvate from D-alanine: step 1/1. Functionally, oxidative deamination of D-amino acids. This chain is D-amino acid dehydrogenase, found in Acinetobacter baumannii (strain AB307-0294).